The sequence spans 275 residues: MKNTAVTFKESKLRNEKLTMLTAYDYSTAKIIDEAGINGILVGDSLGMVCLGHEDTLSVTMEDMIHHTRAVTRGAKNTLVVADMPFMSYQTSVYDSVVNAGRLIKEGRAQVVKLEGGIEVCDKIEAIVKASIPVMAHIGLTPQSVNAFGGFKVQGKDKEAAKELIRAAKAVEKAGAFAVVLECVPTKLAELISKEISIPTIGIGAGAGCDGQILVYQDMLGMYSDFTPKFVKKYANLSEEMNKAFTKYIEEVKDGVFPGPEHGFKISDDVLEKLY.

Mg(2+) contacts are provided by Asp44 and Asp83. 3-methyl-2-oxobutanoate contacts are provided by residues Asp44–Ser45, Asp83, and Lys113. A Mg(2+)-binding site is contributed by Glu115. Glu182 serves as the catalytic Proton acceptor.

Belongs to the PanB family. In terms of assembly, homodecamer; pentamer of dimers. It depends on Mg(2+) as a cofactor.

The protein localises to the cytoplasm. The enzyme catalyses 3-methyl-2-oxobutanoate + (6R)-5,10-methylene-5,6,7,8-tetrahydrofolate + H2O = 2-dehydropantoate + (6S)-5,6,7,8-tetrahydrofolate. Its pathway is cofactor biosynthesis; (R)-pantothenate biosynthesis; (R)-pantoate from 3-methyl-2-oxobutanoate: step 1/2. Catalyzes the reversible reaction in which hydroxymethyl group from 5,10-methylenetetrahydrofolate is transferred onto alpha-ketoisovalerate to form ketopantoate. The sequence is that of 3-methyl-2-oxobutanoate hydroxymethyltransferase from Enterococcus faecalis (strain ATCC 700802 / V583).